Reading from the N-terminus, the 338-residue chain is Lipoate-protein ligase A (338 aa).

One can recognise a BPL/LPL catalytic domain in the interval 29-216; the sequence is PATQRVLFLW…AFFAHYGERV (188 aa). ATP-binding positions include Arg-71, 76–79, and Lys-134; that span reads GAVF. A (R)-lipoate-binding site is contributed by Lys-134.

Belongs to the LplA family. As to quaternary structure, monomer.

The protein resides in the cytoplasm. The catalysed reaction is L-lysyl-[lipoyl-carrier protein] + (R)-lipoate + ATP = N(6)-[(R)-lipoyl]-L-lysyl-[lipoyl-carrier protein] + AMP + diphosphate + H(+). Its pathway is protein modification; protein lipoylation via exogenous pathway; protein N(6)-(lipoyl)lysine from lipoate: step 1/2. It functions in the pathway protein modification; protein lipoylation via exogenous pathway; protein N(6)-(lipoyl)lysine from lipoate: step 2/2. In terms of biological role, catalyzes both the ATP-dependent activation of exogenously supplied lipoate to lipoyl-AMP and the transfer of the activated lipoyl onto the lipoyl domains of lipoate-dependent enzymes. In Salmonella choleraesuis (strain SC-B67), this protein is Lipoate-protein ligase A.